A 443-amino-acid polypeptide reads, in one-letter code: Tol-Pal system protein TolB (443 aa).

Positions 1–31 are cleaved as a signal peptide; that stretch reads MTRLAKGKWRSTLGAMMALAVMVAAIPQARA. A compositionally biased stretch (polar residues) spans 423-432; sequence NERQISTPTE. Residues 423–443 form a disordered region; the sequence is NERQISTPTEASDPAWSPLLP.

Belongs to the TolB family. As to quaternary structure, the Tol-Pal system is composed of five core proteins: the inner membrane proteins TolA, TolQ and TolR, the periplasmic protein TolB and the outer membrane protein Pal. They form a network linking the inner and outer membranes and the peptidoglycan layer.

Its subcellular location is the periplasm. In terms of biological role, part of the Tol-Pal system, which plays a role in outer membrane invagination during cell division and is important for maintaining outer membrane integrity. The sequence is that of Tol-Pal system protein TolB from Rhodospirillum rubrum (strain ATCC 11170 / ATH 1.1.1 / DSM 467 / LMG 4362 / NCIMB 8255 / S1).